The chain runs to 33 residues: Protein YdgV (33 aa).

This chain is Protein YdgV, found in Escherichia coli (strain K12).